A 31-amino-acid chain; its full sequence is Cycloviolacin-O23 (31 aa).

A cross-link (cyclopeptide (Gly-Asn)) is located at residues 1–31 (GLPTCGETCFGGTCNTPGCTCDSSWPICTHN). 3 disulfide bridges follow: C5/C19, C9/C21, and C14/C28.

This is a cyclic peptide. In terms of tissue distribution, expressed in leaves but not in petals, petioles, roots and runners (at protein level).

In terms of biological role, probably participates in a plant defense mechanism. This Viola odorata (Sweet violet) protein is Cycloviolacin-O23.